A 574-amino-acid chain; its full sequence is Alpha-mannosidase I MNS5 (574 aa).

The Cytoplasmic portion of the chain corresponds to 1-9; sequence MSCPIHPRR. The helical; Signal-anchor for type II membrane protein transmembrane segment at 10–26 threads the bilayer; sequence LFLCLLISLTFFVVDPS. Residues 27–574 are Lumenal-facing; sequence SQHIEVKKKQ…VGYCGLWNPL (548 aa). Residues Asn-89, Asn-107, and Asn-121 are each glycosylated (N-linked (GlcNAc...) asparagine). The active-site Proton donor is Glu-134. The N-linked (GlcNAc...) asparagine glycan is linked to Asn-201. The active site involves Asp-274. Asn-349 is a glycosylation site (N-linked (GlcNAc...) asparagine). Glu-367 serves as the catalytic Proton donor. Glu-388 is an active-site residue. Thr-471 contributes to the Ca(2+) binding site. N-linked (GlcNAc...) asparagine glycosylation is present at Asn-494.

The protein belongs to the glycosyl hydrolase 47 family. The cofactor is Ca(2+).

Its subcellular location is the endoplasmic reticulum membrane. It functions in the pathway protein modification; protein glycosylation. In terms of biological role, can convert Man(9)GlcNAc(2) and Man(8)GlcNAc(2) into N-glycans with a terminal alpha-1,6-linked Man residue in the C-branch. Functions in the formation of unique N-glycan structures that are specifically recognized by components of the endoplasmic reticulum-associated degradation (ERAD) machinery, which leads to the degradation of misfolded glycoproteins. Most likely generates N-glycan signal on misfolded glycoproteins that is subsequently recognized by OS9. Required for ERAD of the heavily glycosylated and misfolded BRI1 variants BRI1-5 and BRI1-9. Does not seem to play role in N-glycan processing of correctly folded proteins destined for secretion. The chain is Alpha-mannosidase I MNS5 (MNS5) from Arabidopsis thaliana (Mouse-ear cress).